Consider the following 350-residue polypeptide: Proton-activated chloride channel (350 aa).

The tract at residues 1–51 (MEAIRKELSRSYQELNDETDPIARDPEGAQEEEQEEAASAVVPDRDSDRSN) is disordered. At 1 to 63 (MEAIRKELSR…VHFSRTCLKN (63 aa)) the chain is on the cytoplasmic side. Residues 64–84 (VFSVLLIFVYLLLMGVAVFLV) form a helical membrane-spanning segment. The Extracellular portion of the chain corresponds to 85 to 297 (YQTITDFRDK…KDPYIQEIQD (213 aa)). The chain crosses the membrane as a helical span at residues 298–318 (IITANPWSMIALLCSVFLVLF). At 319 to 350 (KAADFAKLSVKWMIKVRRRHLKKRTRELNHIS) the chain is on the cytoplasmic side.

The protein belongs to the proton-activated chloride channel family.

It is found in the cell membrane. The catalysed reaction is chloride(in) = chloride(out). Its function is as follows. Chloride channel gated by pH that facilitates the entry of chloride ions into cells upon exposure to extracellular acidic pH. This chain is Proton-activated chloride channel, found in Xenopus laevis (African clawed frog).